The chain runs to 477 residues: Minor capsid protein (477 aa).

Belongs to the closteroviridae minor capsid protein family.

The protein localises to the virion. Its function is as follows. Minor capsid protein that encapsidates the 5'-terminal portion of the viral genome. The chain is Minor capsid protein from Vitis vinifera (Grape).